We begin with the raw amino-acid sequence, 617 residues long: uncharacterized protein (617 aa).

A helical transmembrane segment spans residues 10–30 (AFFFFFVSLILLFLSPSYSDV). A disordered region spans residues 34–58 (ESDPIPYENSDASPGVVTSSESDRQ). The span at 43 to 53 (SDASPGVVTSS) shows a compositional bias: polar residues. Positions 60–86 (VSLHRLEELVRNLTELVARLDAKLSET) form a coiled coil. The chain crosses the membrane as a helical span at residues 473–493 (MLWSSPVFFFILFLFGAWHFF). The span at 511-529 (STTMSSSSTTTAQNSSAFS) shows a compositional bias: low complexity. Residues 511–617 (STTMSSSSTT…GNNKALDDES (107 aa)) form a disordered region. The segment covering 531–543 (STRRNDDHMDLRR) has biased composition (basic and acidic residues). Residues 563–584 (VGSNDPSSRAPVETTNYRTTAQ) show a composition bias toward polar residues. Over residues 590 to 599 (GGSGLDSGGF) the composition is skewed to gly residues.

It localises to the membrane. This is an uncharacterized protein from Arabidopsis thaliana (Mouse-ear cress).